We begin with the raw amino-acid sequence, 562 residues long: Alpha-amylase 2 (562 aa).

Asparagine 236 is a binding site for Ca(2+). The active-site Nucleophile is the aspartate 309. Glutamate 338 functions as the Proton donor in the catalytic mechanism.

The protein belongs to the glycosyl hydrolase 13 family. As to quaternary structure, monomer. It depends on Ca(2+) as a cofactor.

The protein resides in the cytoplasm. It catalyses the reaction Endohydrolysis of (1-&gt;4)-alpha-D-glucosidic linkages in polysaccharides containing three or more (1-&gt;4)-alpha-linked D-glucose units.. This Dictyoglomus thermophilum (strain ATCC 35947 / DSM 3960 / H-6-12) protein is Alpha-amylase 2 (amyB).